The following is a 352-amino-acid chain: C5a anaphylatoxin chemotactic receptor 1 (352 aa).

Residues 1 to 11 (MDPISNDSSEI) show a composition bias toward polar residues. Residues 1–20 (MDPISNDSSEITYDYSDGTP) are disordered. Topologically, residues 1–38 (MDPISNDSSEITYDYSDGTPNPDMPADGVYIPKMEPGD) are extracellular. A glycan (N-linked (GlcNAc...) asparagine) is linked at N6. Residues Y13 and Y15 each carry the sulfotyrosine modification. A helical membrane pass occupies residues 39-65 (IAALIIYLAVFLVGVTGNALVVWVTAF). Over 66 to 70 (EAKRT) the chain is Cytoplasmic. The helical transmembrane segment at 71–94 (VNAIWFLNLAVADLLSCLALPILF) threads the bilayer. Residues 95 to 111 (TSIVKHNHWPFGDQACI) lie on the Extracellular side of the membrane. C110 and C189 form a disulfide bridge. A helical membrane pass occupies residues 112-133 (VLPSLILLNMYSSILLLATISA). The Cytoplasmic segment spans residues 134-154 (DRFLLVFKPIWCQKFRRPGLA). Residues 155–175 (WMACGVTWVLALLLTIPSFVF) form a helical membrane-spanning segment. Over 176-202 (RRIHKDPYSDSILCNIDYSKGPFFIEK) the chain is Extracellular. A helical membrane pass occupies residues 203–228 (AIAILRLMVGFVLPLLTLNICYTFLL). Residues 229 to 244 (IRTWSRKATRSTKTLK) lie on the Cytoplasmic side of the membrane. Residues 245 to 267 (VVMAVVTCFFVFWLPYQVTGVIL) traverse the membrane as a helical segment. Residues 268–284 (AWLPRSSSTFQSVERLN) lie on the Extracellular side of the membrane. Residues 285 to 305 (SLCVSLAYINCCVNPIIYVMA) form a helical membrane-spanning segment. Topologically, residues 306 to 352 (GQGFHGRLRRSLPSIIRNVLSEDSLGRDSKSFTRSTMDTSTQKSQAV) are cytoplasmic. A phosphoserine mark is found at S316, S319, S326, S329, S334, S336, and S340. Residues 332 to 352 (RDSKSFTRSTMDTSTQKSQAV) are disordered. The segment covering 337–352 (FTRSTMDTSTQKSQAV) has biased composition (polar residues).

Belongs to the G-protein coupled receptor 1 family. In terms of assembly, homodimer. May also form higher-order oligomers. Interacts (when phosphorylated) with ARRB1 and ARRB2; the interaction is associated with internalization of C5aR. Post-translationally, sulfation plays a critical role in the association of C5aR with C5a, but no significant role in the ability of the receptor to transduce a signal and mobilize calcium in response to a small peptide agonist. In terms of processing, phosphorylated on serine residues in response to C5a binding, resulting in internalization of the receptor and short-term desensitization to the ligand.

Its subcellular location is the cell membrane. It localises to the cytoplasmic vesicle. Receptor for the chemotactic and inflammatory peptide anaphylatoxin C5a. The ligand interacts with at least two sites on the receptor: a high-affinity site on the extracellular N-terminus, and a second site in the transmembrane region which activates downstream signaling events. Receptor activation stimulates chemotaxis, granule enzyme release, intracellular calcium release and superoxide anion production. The chain is C5a anaphylatoxin chemotactic receptor 1 (C5ar1) from Rattus norvegicus (Rat).